Consider the following 381-residue polypeptide: Penicillin-binding protein 4 (381 aa).

Ser60 functions as the Acyl-ester intermediate in the catalytic mechanism. The chain crosses the membrane as a helical span at residues 271–291 (VAGCLDTWSFMATGWGHGWAL). 299 to 308 (GYGHDGASGG) is an NAD(+) binding site. Residues 315–340 (VVPGSGVVAALLTNGGVATSFFTDLF) traverse the membrane as a helical segment.

This sequence belongs to the beta-lactamase family.

It is found in the cell membrane. Functionally, involved in cell wall biosynthesis and may also act as a sensor of external penicillins. The polypeptide is Penicillin-binding protein 4 (pbp) (Amycolatopsis lactamdurans (Nocardia lactamdurans)).